Consider the following 381-residue polypeptide: Periphilin-1 (381 aa).

Composition is skewed to basic and acidic residues over residues 1–28 (MWSE…DGYH), 39–65 (PLLD…GYSR), and 79–121 (RSFS…DGFR). Disordered stretches follow at residues 1-65 (MWSE…GYSR) and 79-260 (RSFS…KSDE). The short motif at 117-123 (RDGFRRK) is the Nuclear localization signal element. Lysine 123 participates in a covalent cross-link: Glycyl lysine isopeptide (Lys-Gly) (interchain with G-Cter in SUMO2). Phosphoserine is present on residues serine 124, serine 128, serine 147, and serine 154. The span at 130–156 (YSRDRSPHKRDAPFFRESPVGRKDSPH) shows a compositional bias: basic and acidic residues. A compositionally biased stretch (low complexity) spans 157-168 (SRSGSSVSSRSY). Over residues 175–187 (THSFHQSQHRKSS) the composition is skewed to basic residues. Serine 181 is subject to Phosphoserine. Lysine 194 participates in a covalent cross-link: Glycyl lysine isopeptide (Lys-Gly) (interchain with G-Cter in SUMO2). Residues 195–208 (RQNEAIRGRGKERS) are compositionally biased toward basic and acidic residues. Residue serine 211 is modified to Phosphoserine. A Glycyl lysine isopeptide (Lys-Gly) (interchain with G-Cter in SUMO2) cross-link involves residue lysine 213. Residues serine 215 and serine 219 each carry the phosphoserine modification. Residues 217–230 (DASPSSSSAVASSK) are compositionally biased toward low complexity. A compositionally biased stretch (basic and acidic residues) spans 231–260 (ALDKPSRLTEKELAEAESKWANETLEKSDE). Lysine 241 is covalently cross-linked (Glycyl lysine isopeptide (Lys-Gly) (interchain with G-Cter in SUMO2)). Lysine 249 carries the N6-acetyllysine; alternate modification. Lysine 249 is covalently cross-linked (Glycyl lysine isopeptide (Lys-Gly) (interchain with G-Cter in SUMO2); alternate). Serine 339 carries the post-translational modification Phosphoserine. Lysine 342 participates in a covalent cross-link: Glycyl lysine isopeptide (Lys-Gly) (interchain with G-Cter in SUMO2).

Homodimer. Component of the HUSH complex; at least composed of TASOR, PPHLN1 and MPHOSPH8. Interacts with SIN3A and HDAC1. May interact with PPL. Ubiquitously expressed. Strong expression in the developing somites and limbs, the embryonic nervous system and the adult brain.

The protein localises to the nucleus. It is found in the cytoplasm. It localises to the chromosome. Its function is as follows. Component of the HUSH complex, a multiprotein complex that mediates epigenetic repression. The HUSH complex is recruited to genomic loci rich in H3K9me3 and is probably required to maintain transcriptional silencing by promoting recruitment of SETDB1, a histone methyltransferase that mediates further deposition of H3K9me3. In the HUSH complex, contributes to the maintenance of the complex at chromatin. Acts as a transcriptional corepressor and regulates the cell cycle, probably via the HUSH complex. The HUSH complex is also involved in the silencing of unintegrated retroviral DNA: some part of the retroviral DNA formed immediately after infection remains unintegrated in the host genome and is transcriptionally repressed. May be involved in epithelial differentiation by contributing to epidermal integrity and barrier formation. The chain is Periphilin-1 from Mus musculus (Mouse).